A 980-amino-acid chain; its full sequence is SLIT and NTRK-like protein 3 (980 aa).

An N-terminal signal peptide occupies residues 1-27 (MMKPSIAEMLHRGRMLWIILLSTIALG). Over 30 to 655 (TPIPLIEDSE…SPPGGPVPLS (626 aa)) the chain is Extracellular. Residue N69 is glycosylated (N-linked (GlcNAc...) asparagine). LRR repeat units lie at residues 79–100 (RPFK…SFLH), 103–124 (NAVS…AFNG), 127–148 (ILKR…TFLG), 151–172 (SLEY…AFRN), 175–196 (KLRV…LFKA), and 198–219 (SLTH…GMLD). Positions 233 to 284 (NPWNCTCEIVQLKSWLERIPYTALVGDITCETPFHFHGKDLREIKKTELCPL) constitute an LRRCT 1 domain. Positions 326 to 361 (EYKSSNKQPKPTKQPRTPRPPSTSQALYPGPNQPPI) are disordered. One can recognise an LRRNT domain in the interval 365–407 (QTRPPIPIICPTGCTCNLHINDLGLTVNCKERGFNNISELLPR). LRR repeat units follow at residues 410–431 (NAKK…DFWN), 434–455 (SLDL…AFIN), 458–479 (NLKS…MFRG), 482–503 (SLHY…AFSL), 506–527 (NLKL…AFAG), and 529–550 (SLAR…GVLE). Positions 563 to 614 (NPWDCTCDLVPFKQWIETISSVSVVGDVLCRTPENLTHRDVRTIELEVLCPE) constitute an LRRCT 2 domain. N-linked (GlcNAc...) asparagine glycosylation occurs at N597. The segment at 622 to 644 (GPSPPQPGDYHPNGGPTSASPYE) is disordered. A helical membrane pass occupies residues 656 to 676 (VLILSLLVLFFSAVFVAAGLF). At 677-980 (AYVLRRRRKK…EVLEKTAYRF (304 aa)) the chain is on the cytoplasmic side. Disordered regions lie at residues 709-735 (LFED…EKAP) and 762-785 (EEEV…GTQP). Over residues 715 to 725 (GNSGGSGGGGR) the composition is skewed to gly residues.

Belongs to the SLITRK family. As to expression, broadly expressed in embryonic brain with highest expression in cortical plate, pyramidal cell layer of the hippocampus, thalamus and hypothalamus.

It localises to the membrane. Its function is as follows. Suppresses neurite outgrowth. The sequence is that of SLIT and NTRK-like protein 3 (Slitrk3) from Mus musculus (Mouse).